Reading from the N-terminus, the 495-residue chain is MAKTQAEINKRLDAYAKGTVDSPYRVKKATSYDPSFGVMEAGAIDADGYYHAQCQDLITDYVLWLTDNKVRTWGNAKDQIKQSYGTGFKIHENKPSTVPKKGWIAVFTSGSYEQWGHIGIVYDGGNTSTFTILEQNWNGYANKKPTKRVDNYYGLTHFIEIPVKAGTTVKKETAKKSASKTPAPKKKATLKVSKNHINYTMDKRGKKPEGMVIHNDAGRSSGQQYENSLANAGYARYANGIAHYYGSEGYVWEAIDAKNQIAWHTGDGTGANSGNFRFAGIEVCQSMSASDAQFLKNEQAVFQFTAEKFKEWGLTPNRKTVRLHMEFVPTACPHRSMVLHTGFNPVTQGRPSQAIMNKLKDYFIKQIKNYMDKGTSSSTVVKDGKTSSASTPATRPVTGSWKKNQYGTWYKPENATFVNGNQPIVTRIGSPFLNAPVGGNLPAGATIVYDEVCIQAGHIWIGYNAYNGNRVYCPVRTCQGVPPNQIPGVAWGVFK.

A Peptidase C51 domain is found at 29–160 (ATSYDPSFGV…NYYGLTHFIE (132 aa)). Ca(2+) is bound by residues Asp-45, Asp-47, Tyr-49, and His-51. Residue Cys-54 is the For endopeptidase activity of the active site. A Ca(2+)-binding site is contributed by Asp-56. Catalysis depends on for endopeptidase activity residues His-117 and Glu-134. The N-acetylmuramoyl-L-alanine amidase domain occupies 205–334 (GKKPEGMVIH…MEFVPTACPH (130 aa)). Positions 214, 324, and 332 each coordinate Zn(2+). A compositionally biased stretch (polar residues) spans 378–393 (STVVKDGKTSSASTPA). Residues 378–398 (STVVKDGKTSSASTPATRPVT) are disordered. Residues 412-481 (PENATFVNGN…YCPVRTCQGV (70 aa)) enclose the SH3b domain.

Belongs to the N-acetylmuramoyl-L-alanine amidase 2 family. Zn(2+) serves as cofactor.

It catalyses the reaction Hydrolyzes the link between N-acetylmuramoyl residues and L-amino acid residues in certain cell-wall glycopeptides.. In terms of biological role, endolysin that degrades host peptidoglycans and participates in the sequential events which lead to the programmed host cell lysis releasing the mature viral particles. Exhibits lytic activity against Staphylococcus aureus. The CHAP activity cleaves the peptidic bond between the D-alanine of the tetra-peptide stem and the first glycine of the penta-glycine cross-bridge. The N-acetyl-muramidase activity cleaves between N-acetylmuramic acid and N-acetylglucosamine bonds. The protein is Endolysin LysK of Staphylococcus aureus.